The primary structure comprises 160 residues: Large ribosomal subunit protein eL21 (160 aa).

The protein belongs to the eukaryotic ribosomal protein eL21 family.

The polypeptide is Large ribosomal subunit protein eL21 (rpl21) (Dictyostelium discoideum (Social amoeba)).